The chain runs to 201 residues: Potassium-transporting ATPase KdpC subunit (201 aa).

The helical transmembrane segment at 17 to 37 (LLTGLAYPLAMTGLAGILFPV) threads the bilayer.

This sequence belongs to the KdpC family. In terms of assembly, the system is composed of three essential subunits: KdpA, KdpB and KdpC.

It is found in the cell inner membrane. Functionally, part of the high-affinity ATP-driven potassium transport (or Kdp) system, which catalyzes the hydrolysis of ATP coupled with the electrogenic transport of potassium into the cytoplasm. This subunit acts as a catalytic chaperone that increases the ATP-binding affinity of the ATP-hydrolyzing subunit KdpB by the formation of a transient KdpB/KdpC/ATP ternary complex. In Methylobacterium nodulans (strain LMG 21967 / CNCM I-2342 / ORS 2060), this protein is Potassium-transporting ATPase KdpC subunit.